Here is a 312-residue protein sequence, read N- to C-terminus: Gamma-soluble NSF attachment protein (312 aa).

The interval 281–312 is disordered; that stretch reads KKKSPATPQAKPDGAAGMAAEEEEDEYSGGLC. Phosphoserine is present on Ser-284. At Thr-287 the chain carries Phosphothreonine. Over residues 300-312 the composition is skewed to acidic residues; it reads AEEEEDEYSGGLC. Position 308 is a phosphoserine (Ser-308).

This sequence belongs to the SNAP family. Interacts with RAB11FIP5. Interacts with VTI1A. As to expression, abundantly expressed in the heart, liver and kidneys with lower expression in the brain, spleen, lung, muscle and testes.

It is found in the membrane. Its subcellular location is the golgi apparatus. In terms of biological role, required for vesicular transport between the endoplasmic reticulum and the Golgi apparatus. The sequence is that of Gamma-soluble NSF attachment protein from Mus musculus (Mouse).